Reading from the N-terminus, the 253-residue chain is Imidazole glycerol phosphate synthase subunit HisF (253 aa).

Active-site residues include Asp-11 and Asp-130.

Belongs to the HisA/HisF family. Heterodimer of HisH and HisF.

Its subcellular location is the cytoplasm. The enzyme catalyses 5-[(5-phospho-1-deoxy-D-ribulos-1-ylimino)methylamino]-1-(5-phospho-beta-D-ribosyl)imidazole-4-carboxamide + L-glutamine = D-erythro-1-(imidazol-4-yl)glycerol 3-phosphate + 5-amino-1-(5-phospho-beta-D-ribosyl)imidazole-4-carboxamide + L-glutamate + H(+). Its pathway is amino-acid biosynthesis; L-histidine biosynthesis; L-histidine from 5-phospho-alpha-D-ribose 1-diphosphate: step 5/9. IGPS catalyzes the conversion of PRFAR and glutamine to IGP, AICAR and glutamate. The HisF subunit catalyzes the cyclization activity that produces IGP and AICAR from PRFAR using the ammonia provided by the HisH subunit. This Clostridium botulinum (strain 657 / Type Ba4) protein is Imidazole glycerol phosphate synthase subunit HisF.